A 332-amino-acid polypeptide reads, in one-letter code: Small ribosomal subunit biogenesis GTPase RsgA (332 aa).

In terms of domain architecture, CP-type G spans 103-259 (RQQLIAANLD…LIDTPGMREL (157 aa)). Residues 148-151 (TKVD) and 201-209 (GSSGAGKST) each bind GTP. Residues C281, C286, H288, and C294 each coordinate Zn(2+).

Belongs to the TRAFAC class YlqF/YawG GTPase family. RsgA subfamily. In terms of assembly, monomer. Associates with 30S ribosomal subunit, binds 16S rRNA. It depends on Zn(2+) as a cofactor.

The protein resides in the cytoplasm. In terms of biological role, one of several proteins that assist in the late maturation steps of the functional core of the 30S ribosomal subunit. Helps release RbfA from mature subunits. May play a role in the assembly of ribosomal proteins into the subunit. Circularly permuted GTPase that catalyzes slow GTP hydrolysis, GTPase activity is stimulated by the 30S ribosomal subunit. This chain is Small ribosomal subunit biogenesis GTPase RsgA, found in Xylella fastidiosa (strain M12).